Reading from the N-terminus, the 162-residue chain is Phosphopantetheine adenylyltransferase (162 aa).

Ser9 is a substrate binding site. Residues 9–10 and His17 each bind ATP; that span reads SF. Substrate-binding residues include Lys41, Thr73, and Arg87. Residues 88–90, Glu98, and 123–129 each bind ATP; these read GLR and YSFISSS.

The protein belongs to the bacterial CoaD family. As to quaternary structure, homohexamer. Mg(2+) serves as cofactor.

It is found in the cytoplasm. It catalyses the reaction (R)-4'-phosphopantetheine + ATP + H(+) = 3'-dephospho-CoA + diphosphate. It participates in cofactor biosynthesis; coenzyme A biosynthesis; CoA from (R)-pantothenate: step 4/5. Its function is as follows. Reversibly transfers an adenylyl group from ATP to 4'-phosphopantetheine, yielding dephospho-CoA (dPCoA) and pyrophosphate. This is Phosphopantetheine adenylyltransferase from Carboxydothermus hydrogenoformans (strain ATCC BAA-161 / DSM 6008 / Z-2901).